The following is a 95-amino-acid chain: Aspartyl/glutamyl-tRNA(Asn/Gln) amidotransferase subunit C (95 aa).

This sequence belongs to the GatC family. As to quaternary structure, heterotrimer of A, B and C subunits.

The catalysed reaction is L-glutamyl-tRNA(Gln) + L-glutamine + ATP + H2O = L-glutaminyl-tRNA(Gln) + L-glutamate + ADP + phosphate + H(+). It carries out the reaction L-aspartyl-tRNA(Asn) + L-glutamine + ATP + H2O = L-asparaginyl-tRNA(Asn) + L-glutamate + ADP + phosphate + 2 H(+). Functionally, allows the formation of correctly charged Asn-tRNA(Asn) or Gln-tRNA(Gln) through the transamidation of misacylated Asp-tRNA(Asn) or Glu-tRNA(Gln) in organisms which lack either or both of asparaginyl-tRNA or glutaminyl-tRNA synthetases. The reaction takes place in the presence of glutamine and ATP through an activated phospho-Asp-tRNA(Asn) or phospho-Glu-tRNA(Gln). This Clostridium botulinum (strain 657 / Type Ba4) protein is Aspartyl/glutamyl-tRNA(Asn/Gln) amidotransferase subunit C.